The chain runs to 357 residues: 3-dehydroquinate synthase (357 aa).

NAD(+) is bound by residues 99-103 (GATGD), 123-124 (TT), K135, K144, and 162-165 (FLET). Zn(2+) is bound by residues E177, H247, and H261.

This sequence belongs to the sugar phosphate cyclases superfamily. Dehydroquinate synthase family. Requires Co(2+) as cofactor. Zn(2+) is required as a cofactor. The cofactor is NAD(+).

It localises to the cytoplasm. It carries out the reaction 7-phospho-2-dehydro-3-deoxy-D-arabino-heptonate = 3-dehydroquinate + phosphate. It functions in the pathway metabolic intermediate biosynthesis; chorismate biosynthesis; chorismate from D-erythrose 4-phosphate and phosphoenolpyruvate: step 2/7. Functionally, catalyzes the conversion of 3-deoxy-D-arabino-heptulosonate 7-phosphate (DAHP) to dehydroquinate (DHQ). In Macrococcus caseolyticus (strain JCSC5402) (Macrococcoides caseolyticum), this protein is 3-dehydroquinate synthase.